Reading from the N-terminus, the 240-residue chain is Ribose-5-phosphate isomerase (240 aa).

Substrate contacts are provided by residues 34 to 37 (SGST), 88 to 91 (DGAD), and 101 to 104 (KGGG). The active-site Proton acceptor is the glutamate 110. Lysine 128 is a binding site for substrate.

It belongs to the ribose 5-phosphate isomerase family.

The protein resides in the cytoplasm. The enzyme catalyses aldehydo-D-ribose 5-phosphate = D-ribulose 5-phosphate. Its pathway is carbohydrate degradation; pentose phosphate pathway; D-ribose 5-phosphate from D-ribulose 5-phosphate (non-oxidative stage): step 1/1. Its function is as follows. Involved in the first step of the non-oxidative branch of the pentose phosphate pathway. It catalyzes the reversible conversion of ribose-5-phosphate to ribulose 5-phosphate. The polypeptide is Ribose-5-phosphate isomerase (RKI1) (Candida albicans (strain SC5314 / ATCC MYA-2876) (Yeast)).